The sequence spans 125 residues: Large ribosomal subunit protein bL12 (125 aa).

This sequence belongs to the bacterial ribosomal protein bL12 family. In terms of assembly, homodimer. Part of the ribosomal stalk of the 50S ribosomal subunit. Forms a multimeric L10(L12)X complex, where L10 forms an elongated spine to which 2 to 4 L12 dimers bind in a sequential fashion. Binds GTP-bound translation factors.

In terms of biological role, forms part of the ribosomal stalk which helps the ribosome interact with GTP-bound translation factors. Is thus essential for accurate translation. The protein is Large ribosomal subunit protein bL12 of Rickettsia typhi (strain ATCC VR-144 / Wilmington).